The primary structure comprises 585 residues: Complement component C8 alpha chain (585 aa).

The signal sequence occupies residues 1-20; that stretch reads MLVAAFFTLFLVTCQPAVTA. Positions 21 to 30 are excised as a propeptide; it reads QEKVNQRVNR. Residues 38–91 form the TSP type-1 1 domain; sequence DCQLSSWSEWTDCFPCQDTKYRHRSLLQPNKFGGTICSGDIWDRASCYSPTACL. Disulfide bonds link Cys39-Cys74, Cys50-Cys84, Cys53-Cys90, Cys96-Cys108, Cys102-Cys121, Cys115-Cys130, and Cys140-Cys177. C-linked (Man) tryptophan glycosylation occurs at Trp44. The LDL-receptor class A domain occupies 94-132; it reads AQCGQDFQCKETGRCLKRHLVCNGENDCLDGSDEDNCED. Ca(2+) is bound by residues Leu113, Asn116, Glu118, Asp120, Asp126, and Glu127. The MACPF domain occupies 136–499; sequence TESDCAQYDP…QYLMEFNACR (364 aa). 4 beta stranded membrane-spanning segments follow: residues 248–256, 259–266, 377–384, and 391–396; these read AGVTISAGL, SPLLGTVG, GGFGEIQY, and AQGILS. Cys375 and Cys400 are disulfide-bonded. An N-linked (GlcNAc...) asparagine glycan is attached at Asn438. Disulfide bonds link Cys498–Cys545, Cys500–Cys516, Cys503–Cys518, and Cys520–Cys529. Residues 499 to 530 form the EGF-like domain; sequence RCGPCFNNGKPILEGTSCRCQCSLGLQGPACE. A TSP type-1 2 domain is found at 540–584; sequence DGHWSCWGSWSPCTAGTRERRRECNNPAPQNGGAPCPGWRVQTQA. C-linked (Man) tryptophan glycans are attached at residues Trp543, Trp546, and Trp549. Intrachain disulfides connect Cys552-Cys585 and Cys563-Cys575.

It belongs to the complement C6/C7/C8/C9 family. As to quaternary structure, heterotrimer of 3 chains: alpha (C8A), beta (C8B) and gamma (C8G); the alpha and gamma chains are disulfide bonded. Component of the membrane attack complex (MAC), composed of complement C5b, C6, C7, C8A, C8B, C8G and multiple copies of the pore-forming subunit C9.

It localises to the secreted. The protein resides in the target cell membrane. Membrane attack complex (MAC) assembly is inhibited by CD59, thereby protecting self-cells from damage during complement activation. CD59 acts by binding to the beta-haipins of C8 (C8A and C8B), forming an intermolecular beta-sheet that prevents incorporation of the multiple copies of C9 required for complete formation of the osmolytic pore. MAC assembly is also inhibited by clusterin (CLU) chaperones that inhibit polymerization of C9. Functionally, component of the membrane attack complex (MAC), a multiprotein complex activated by the complement cascade, which inserts into a target cell membrane and forms a pore, leading to target cell membrane rupture and cell lysis. The MAC is initiated by proteolytic cleavage of C5 into complement C5b in response to the classical, alternative, lectin and GZMK complement pathways. The complement pathways consist in a cascade of proteins that leads to phagocytosis and breakdown of pathogens and signaling that strengthens the adaptive immune system. C8A, together with C8B and C8G, inserts into the target membrane, but does not form pores by itself. During MAC assembly, associates with C5b, C6 and C7 to form the C5b8 intermediate complex that inserts into the target membrane and traverses the bilayer increasing membrane rigidity. In Oryctolagus cuniculus (Rabbit), this protein is Complement component C8 alpha chain (C8A).